The primary structure comprises 252 residues: 2-succinyl-6-hydroxy-2,4-cyclohexadiene-1-carboxylate synthase (252 aa).

Belongs to the AB hydrolase superfamily. MenH family. In terms of assembly, monomer.

The catalysed reaction is 5-enolpyruvoyl-6-hydroxy-2-succinyl-cyclohex-3-ene-1-carboxylate = (1R,6R)-6-hydroxy-2-succinyl-cyclohexa-2,4-diene-1-carboxylate + pyruvate. The protein operates within quinol/quinone metabolism; 1,4-dihydroxy-2-naphthoate biosynthesis; 1,4-dihydroxy-2-naphthoate from chorismate: step 3/7. It participates in quinol/quinone metabolism; menaquinone biosynthesis. Its function is as follows. Catalyzes a proton abstraction reaction that results in 2,5-elimination of pyruvate from 2-succinyl-5-enolpyruvyl-6-hydroxy-3-cyclohexene-1-carboxylate (SEPHCHC) and the formation of 2-succinyl-6-hydroxy-2,4-cyclohexadiene-1-carboxylate (SHCHC). The protein is 2-succinyl-6-hydroxy-2,4-cyclohexadiene-1-carboxylate synthase of Salmonella agona (strain SL483).